We begin with the raw amino-acid sequence, 141 residues long: Flagellar assembly factor FliW (141 aa).

Belongs to the FliW family. Interacts with translational regulator CsrA and flagellin(s).

It is found in the cytoplasm. Acts as an anti-CsrA protein, binds CsrA and prevents it from repressing translation of its target genes, one of which is flagellin. Binds to flagellin and participates in the assembly of the flagellum. In Clostridium botulinum (strain Alaska E43 / Type E3), this protein is Flagellar assembly factor FliW.